Consider the following 600-residue polypeptide: Novobiocin biosynthesis protein H (600 aa).

Residues 505 to 526 are disordered; that stretch reads GGKTDRAGLPDPVKATQPAGLG. In terms of domain architecture, Carrier spans 526 to 600; that stretch reads GPRTPAEKVL…QLAAIATLEE (75 aa). Ser-561 carries the post-translational modification O-(pantetheine 4'-phosphoryl)serine.

This sequence belongs to the ATP-dependent AMP-binding enzyme family.

It participates in antibiotic biosynthesis; novobiocin biosynthesis. In terms of biological role, together with NovI, involved in the formation of a beta-OH-Tyr intermediate in the novobiocin biosynthesis pathway, an aminocoumarin family antibiotic that targets bacterial DNA gyrases. The ATP-dependent AMP-binding region activates L-Tyr as L-tyrosyl-AMP and then transfers the L-tyrosyl group to the acyl carrier domain through thioester formation to form a tyrosyl-S intermediate that is covalently tethered to NovH (L-Tyr-S-NovH). This chain is Novobiocin biosynthesis protein H (novH), found in Streptomyces niveus (Streptomyces spheroides).